The following is a 245-amino-acid chain: Leucyl/phenylalanyl-tRNA--protein transferase (245 aa).

Belongs to the L/F-transferase family.

It is found in the cytoplasm. It carries out the reaction N-terminal L-lysyl-[protein] + L-leucyl-tRNA(Leu) = N-terminal L-leucyl-L-lysyl-[protein] + tRNA(Leu) + H(+). The catalysed reaction is N-terminal L-arginyl-[protein] + L-leucyl-tRNA(Leu) = N-terminal L-leucyl-L-arginyl-[protein] + tRNA(Leu) + H(+). The enzyme catalyses L-phenylalanyl-tRNA(Phe) + an N-terminal L-alpha-aminoacyl-[protein] = an N-terminal L-phenylalanyl-L-alpha-aminoacyl-[protein] + tRNA(Phe). Its function is as follows. Functions in the N-end rule pathway of protein degradation where it conjugates Leu, Phe and, less efficiently, Met from aminoacyl-tRNAs to the N-termini of proteins containing an N-terminal arginine or lysine. The protein is Leucyl/phenylalanyl-tRNA--protein transferase of Paraburkholderia xenovorans (strain LB400).